The following is a 279-amino-acid chain: 3-methyl-2-oxobutanoate hydroxymethyltransferase (279 aa).

Mg(2+) contacts are provided by Asp-44 and Asp-83. Residues 44–45 (DS), Asp-83, and Lys-113 each bind 3-methyl-2-oxobutanoate. Glu-115 contacts Mg(2+). Catalysis depends on Glu-182, which acts as the Proton acceptor.

Belongs to the PanB family. In terms of assembly, homodecamer; pentamer of dimers. Mg(2+) is required as a cofactor.

It localises to the cytoplasm. The enzyme catalyses 3-methyl-2-oxobutanoate + (6R)-5,10-methylene-5,6,7,8-tetrahydrofolate + H2O = 2-dehydropantoate + (6S)-5,6,7,8-tetrahydrofolate. The protein operates within cofactor biosynthesis; (R)-pantothenate biosynthesis; (R)-pantoate from 3-methyl-2-oxobutanoate: step 1/2. Functionally, catalyzes the reversible reaction in which hydroxymethyl group from 5,10-methylenetetrahydrofolate is transferred onto alpha-ketoisovalerate to form ketopantoate. The sequence is that of 3-methyl-2-oxobutanoate hydroxymethyltransferase from Desulfotalea psychrophila (strain LSv54 / DSM 12343).